Reading from the N-terminus, the 373-residue chain is MAALFEENDSYSDSENEEDFSGFLSEIEENENEDEFENDDEFEDDDELENVDELEDDELSSEEVDIPSENEVIVELHDGQAEVEESLLDALLGKALAGDQMNSRIEGLFEDLDSSVEPDIIDRSELEDVDSGISVGAVSSSSAETQASDAKCKNKDAFDMSSLKKYMQYITEEEHAVSVEDIPDFASKKNVYGTSFNVRNGIMSRPPRFEFARHDQRWIDSCVSMAYEKDKTLKELITLGKLTTTVKAGAKIEFRTKFTDVHIRSADEINLMETHDIQQIIRDALNSKRLAVVLFGIGKDGKVTGCHMGPGQQDNLRLALDTAVQTEFAPPIENILDVVDMNFVPVEEMDETFLIVIRVKQLRNQVYRLESSV.

A disordered region spans residues 1 to 67 (MAALFEENDS…ELSSEEVDIP (67 aa)). An SLFN-like fold region spans residues 247-373 (KAGAKIEFRT…NQVYRLESSV (127 aa)).

It belongs to the Schlafen family. As to quaternary structure, component of the trimeric PUCH (precursor of 21U RNA 5'-end cleavage holoenzyme) complex; consisting of tofu-1, tofu-2 and either slfl-3 or slfl-4; which is required for processing of piRNA precursors. Within the complex, interacts (via N-terminus) with tofu-2 (via N-terminus); the interaction stabilizes tofu-2 and may form a functional nuclease. Within the complex, required for the interaction of tofu-2 (via N-terminus) with slfl-3 (via N-terminus). Interacts (via residues 82-172) with the PETISCO complex subunit tofu-6 (via residues 120-314); the interaction between the PETISCO and PUCH complex members enhances piRNA production in vivo. In terms of tissue distribution, expressed in the germline.

The protein resides in the cytoplasm. In terms of biological role, component of the trimeric PUCH (precursor of 21U RNA 5'-end cleavage holoenzyme) complex, that acts as an endoribonuclease processing the 5'-end of precursor Piwi-interacting RNAs (piRNAs). The PUCH complex consists of tofu-1, tofu-2 and either slfl-3 or slfl-4, with tofu-2 exhibiting endoribonuclease activity. PUCH-mediated processing strictly requires a 7-methyl-G cap (m7 G-cap) and an uracil at position three (U3). PUCH also exhibits a strict bias for piRNA precursors with an A or G at position 1. Mature piRNA production is enhanced by the interaction of PUCH with the PETISCO complex, which is stabilizing piRNA precursors and allows their processing by PUCH. In Caenorhabditis elegans, this protein is Schlafen-like protein 1.